The chain runs to 356 residues: Alpha-N-acetylneuraminide alpha-2,8-sialyltransferase (356 aa).

Residues 1–29 (MSPCGRARRHTSRGAMAVLAWKFPRTRLP) are Cytoplasmic-facing. The chain crosses the membrane as a helical; Signal-anchor for type II membrane protein span at residues 30–48 (VGASALCVVVLCWLYVFPV). At 49–356 (YRLPDEKEIV…CEDNSLQPTS (308 aa)) the chain is on the lumenal side. 2 N-linked (GlcNAc...) asparagine glycosylation sites follow: N71 and N119. A disulfide bridge links C138 with C287. CMP-N-acetyl-beta-neuraminate is bound by residues N143 and N166. Residues N214 and N245 are each glycosylated (N-linked (GlcNAc...) asparagine). Residues S274, T275, G276, W296, and H310 each coordinate CMP-N-acetyl-beta-neuraminate.

The protein belongs to the glycosyltransferase 29 family.

The protein resides in the golgi apparatus membrane. It catalyses the reaction an N-acetyl-alpha-neuraminyl-(2-&gt;3)-beta-D-galactosyl derivative + CMP-N-acetyl-beta-neuraminate = an N-acetyl-alpha-neuraminyl-(2-&gt;8)-N-acetyl-alpha-neuraminyl-(2-&gt;3)-beta-D-galactosyl derivative + CMP + H(+). The enzyme catalyses a ganglioside GM3 (d18:1(4E)) + CMP-N-acetyl-beta-neuraminate = a ganglioside GD3 (d18:1(4E)) + CMP + H(+). It carries out the reaction a ganglioside GD3 (d18:1(4E)) + CMP-N-acetyl-beta-neuraminate = a ganglioside GT3 (d18:1(4E)) + CMP + H(+). The catalysed reaction is a ganglioside GD1a (d18:1(4E)) + CMP-N-acetyl-beta-neuraminate = a ganglioside GT1a (d18:1(4E)) + CMP + H(+). It catalyses the reaction a ganglioside GT1b (d18:1(4E)) + CMP-N-acetyl-beta-neuraminate = a ganglioside GQ1b (d18:1(4E)) + CMP + H(+). The enzyme catalyses a ganglioside GM1b (d18:1(4E)) + CMP-N-acetyl-beta-neuraminate = a ganglioside GD1c (d18:1(4E)) + CMP + H(+). It carries out the reaction a ganglioside GD3 + CMP-N-acetyl-beta-neuraminate = a ganglioside GT3 + CMP + H(+). The catalysed reaction is [alpha-N-acetylneuraminyl-(2-&gt;8)](n)-alpha-N-acetylneuraminyl-(2-&gt;8)-alpha-N-acetylneuraminyl-(2-&gt;3)-beta-D-galactosyl-(1-&gt;4)-beta-D-glucosyl-(1&lt;-&gt;1)-ceramide + CMP-N-acetyl-beta-neuraminate = [alpha-N-acetylneuraminyl-(2-&gt;8)](n+1)-alpha-N-acetylneuraminyl-(2-&gt;8)-alpha-N-acetylneuraminyl-(2-&gt;3)-beta-D-galactosyl-(1-&gt;4)-beta-D-glucosyl-(1&lt;-&gt;1)-ceramide + CMP + H(+). It functions in the pathway protein modification; protein glycosylation. Its pathway is lipid metabolism; sphingolipid metabolism. Functionally, catalyzes the addition of sialic acid in alpha 2,8-linkage to the sialic acid moiety of the ganglioside GM3 to form ganglioside GD3; gangliosides are a subfamily of complex glycosphingolipds that contain one or more residues of sialic acid. Can catalyze the addition of a second alpha-2,8- sialic acid to GD3 to form GT3. Can use GM1b, GD1a and GT1b as acceptor substrates to synthesize GD1c, GT1a and GQ1b respectively. The protein is Alpha-N-acetylneuraminide alpha-2,8-sialyltransferase of Bos taurus (Bovine).